The primary structure comprises 731 residues: Ubiquitin carboxyl-terminal hydrolase 17 (731 aa).

C57, C60, C68, C71, C77, C81, H90, and C94 together coordinate Zn(2+). The MYND-type zinc finger occupies C57–C94. 2 disordered regions span residues Y171–N219 and L262–K281. 2 stretches are compositionally biased toward polar residues: residues G207 to N219 and K265 to K281. The USP domain occupies F329–D633. C338 serves as the catalytic Nucleophile. H592 (proton acceptor) is an active-site residue. The interval P637–S702 is disordered. The segment covering D677–S701 has biased composition (low complexity).

The protein belongs to the peptidase C19 family.

It catalyses the reaction Thiol-dependent hydrolysis of ester, thioester, amide, peptide and isopeptide bonds formed by the C-terminal Gly of ubiquitin (a 76-residue protein attached to proteins as an intracellular targeting signal).. Its function is as follows. Recognizes and hydrolyzes the peptide bond at the C-terminal Gly of ubiquitin. Involved in the processing of poly-ubiquitin precursors as well as that of ubiquitinated proteins. The polypeptide is Ubiquitin carboxyl-terminal hydrolase 17 (UBP17) (Arabidopsis thaliana (Mouse-ear cress)).